Reading from the N-terminus, the 275-residue chain is UPF0328 protein ECU05_0050 (275 aa).

This sequence belongs to the UPF0328 family.

The chain is UPF0328 protein ECU05_0050 from Encephalitozoon cuniculi (strain GB-M1) (Microsporidian parasite).